The chain runs to 486 residues: MGPLSPARTLRLWGPRSLGVALGVFMTIGFALQLLGGPFQRRLPGLQLRQPSAPSLRPALPSCPPRQRLVFLKTHKSGSSSVLSLLHRYGDQHGLRFALPARYQFGYPKLFQASRVKGYRPQGGGTQLPFHILCHHMRFNLKEVLQVMPSDSFFFSIVRDPAALARSAFSYYKSTSSAFRKSPSLAAFLANPRGFYRPGARGDHYARNLLWFDFGLPFPPEKRAKRGNIHPPRDPNPPQLQVLPSGAGPRAQTLNPNALIHPVSTVTDHRSQISSPASFDLGSSSFIQWGLAWLDSVFDLVMVAEYFDESLVLLADALCWGLDDVVGFMHNAQAGHKQGLSTVSNSGLTAEDRQLTARARAWNNLDWALYVHFNRSLWARIEKYGQGRLQTAVAELRARREALAKHCLVGGEASDPKYITDRRFRPFQFGSAKVLGYILRSGLSPQDQEECERLATPELQYKDKLDAKQFPPTVSLPLKTSRPLSP.

The Cytoplasmic portion of the chain corresponds to 1–18 (MGPLSPARTLRLWGPRSL). A helical; Signal-anchor for type II membrane protein membrane pass occupies residues 19–39 (GVALGVFMTIGFALQLLGGPF). The Lumenal segment spans residues 40-486 (QRRLPGLQLR…PLKTSRPLSP (447 aa)). The N-linked (GlcNAc...) asparagine glycan is linked to asparagine 374.

Belongs to the galactose-3-O-sulfotransferase family. Requires Mn(2+) as cofactor. As to expression, expressed mainly in placenta, thymus, testis, ovary, spinal cord, trachea and adrenal gland and at low levels in brain, lung, spleen, prostate, small intestine, colon, stomach thyroid and lymph node.

Its subcellular location is the golgi apparatus. The protein localises to the golgi stack membrane. It participates in protein modification; carbohydrate sulfation. Its function is as follows. Catalyzes the transfer of sulfate to beta-1,3-linked galactose residues in O-linked glycoproteins. Good substrates include asialofetuin, Gal-beta-1,3-GalNAc and Gal-beta-1,3 (GlcNAc-beta-1,6)GalNAc. In Homo sapiens (Human), this protein is Galactose-3-O-sulfotransferase 4 (GAL3ST4).